A 113-amino-acid polypeptide reads, in one-letter code: Transcriptional regulator RamA (113 aa).

An HTH araC/xylS-type domain is found at 9–107 (DTIVEWIDDN…NQPPGAYRKE (99 aa)). 2 consecutive DNA-binding regions (H-T-H motif) follow at residues 26–47 (DDIARHAGYSKWHLQRLFLQYK) and 74–97 (VYDICLKYGFDSQQTFTRVFTRTF).

As to quaternary structure, monomer. Interacts with the C-terminus of RNAP subunit RpoA when part of class I or class II promoter complexes. Also interacts with sigma-70/RpoD in class II promoter complexes.

Transcriptional regulator. Binds to regulatory regions of target genes, including its own gene, efflux pump operon acrAB, antisense RNA gene micF, and various genes involved in lipid A biosynthesis, including lpxO and lpxL-2. Regulates expression of many genes, perhaps including its own; activates various lipid A biosynthetic genes, and as a result of activating acrAB, confers multidrug resistance. Plays a role in virulence and survival in host cells. The protein is Transcriptional regulator RamA of Klebsiella pneumoniae subsp. pneumoniae (strain HS11286).